We begin with the raw amino-acid sequence, 223 residues long: N-acetylmuramic acid 6-phosphate phosphatase (223 aa).

Aspartate 9 functions as the Nucleophile in the catalytic mechanism. Mg(2+)-binding residues include aspartate 9, aspartate 11, and aspartate 168. Residue aspartate 11 is the Proton donor of the active site.

The protein belongs to the HAD-like hydrolase superfamily. CbbY/CbbZ/Gph/YieH family. Phosphatase MupP subfamily. Mg(2+) is required as a cofactor.

It catalyses the reaction N-acetyl-D-muramate 6-phosphate + H2O = N-acetyl-D-muramate + phosphate. Its pathway is cell wall biogenesis; peptidoglycan recycling. Its function is as follows. Specifically catalyzes the dephosphorylation of N-acetylmuramate 6-phosphate (MurNAc-6P) to MurNac. Is involved in peptidoglycan recycling as part of a cell wall recycling pathway that bypasses de novo biosynthesis of the peptidoglycan precursor UDP-MurNAc. Plays a role in intrinsic resistance to fosfomycin, which targets the de novo synthesis of UDP-MurNAc. Shows a very low activity on GlcNAc-6P, and neither alpha-1-phosphorylated MurNAc, GlcNAc, or glucose nor glucosamine-6P or glucose-6P can be used as a substrate. The chain is N-acetylmuramic acid 6-phosphate phosphatase from Pseudomonas putida (strain ATCC 47054 / DSM 6125 / CFBP 8728 / NCIMB 11950 / KT2440).